Consider the following 728-residue polypeptide: Dynamin-like protein 1 (728 aa).

Positions 1–119 (MKELFQKIWQ…ILQEKVQSID (119 aa)) are assembly domain, required for tetramerization. The 284-residue stretch at 159–442 (QNLEFNIAIT…LYAGEKSKIA (284 aa)) folds into the Dynamin-type G domain. Residues 169–176 (GVMNAGKS) form a G1 motif region. GDP is bound at residue 171–177 (MNAGKSS). The tract at residues 195-196 (ET) is G2 motif. A G3 motif region spans residues 298-301 (DTPG). A G4 motif region spans residues 358 to 361 (TKAD). Residue Lys359 participates in GDP binding. Glu388 is a region of interest (G5 motif). 400–402 (SAK) lines the GDP pocket. A required for liposome binding but not for tetramerization region spans residues 470 to 695 (ENKQGVSEEN…LESLEKVLQS (226 aa)).

The protein belongs to the TRAFAC class dynamin-like GTPase superfamily. Dynamin/Fzo/YdjA family. As to quaternary structure, forms a 2:2 heterotetramer with DLP1. DLP2 forms a central back-to-back dimer flanked on each side by a DLP1 subunit. In the crystal structures the 2 DLP1 subunits are in very different conformations.

The protein resides in the cytoplasm. It localises to the cytosol. It catalyses the reaction GTP + H2O = GDP + phosphate + H(+). Its function is as follows. The heterotetrameric DLP1(2)-DLP2(2) complex tethers liposomes and may mediate their fusion. Initial binding is probably mediated by DLP1, while DLP2 couples DLP1 subunits and increases the effective reach of the complex up to 45 nm. The role of the nucleotide is unknown. This subunit alone weakly binds to liposomes; GTP, GDP, GMPPCP and GMPPNP do not change heterotetramer binding. Tetramerization is required for GTPase activity, suggesting the GTPase domains (dynamin-type G) from DLP1 and DLP2 must dimerize to reconstitute the GTPase active site. The protein is Dynamin-like protein 1 of Campylobacter jejuni subsp. jejuni serotype O:23/36 (strain 81-176).